The chain runs to 359 residues: MGVEQILKRKTGVIVGEDVHNLFTYAKEHKFAIPAINVTSSSTAVAALEAARDSKSPIILQTSNGGAAYFAGKGISNEGQNASIKGAIAAAHYIRSIAPAYGIPVVLHSDHCAKKLLPWFDGMLEADEAYFKEHGEPLFSSHMLDLSEETDEENISTCVKYFKRMAAMDQWLEMEIGITGGEEDGVNNENADKEDLYTKPEQVYNVYKALHPISPNFSIAAAFGNCHGLYAGDIALRPEILAEHQKYTREQVGCKEEKPLFLVFHGGSGSTVQEFHTGIDNGVVKVNLDTDCQYAYLTGIRDYVLNKKDYIMSPVGNPEGPEKPNKKFFDPRVWVREGEKTMGAKITKSLETFRTTNTL.

The residue at position 11 (T11) is a Phosphothreonine. K27 is covalently cross-linked (Glycyl lysine isopeptide (Lys-Gly) (interchain with G-Cter in ubiquitin)). A phosphoserine mark is found at S56 and S63. Position 63 (S63) interacts with D-glyceraldehyde 3-phosphate. A Glycyl lysine isopeptide (Lys-Gly) (interchain with G-Cter in ubiquitin) cross-link involves residue K73. Phosphoserine occurs at positions 76 and 83. K85 is covalently cross-linked (Glycyl lysine isopeptide (Lys-Gly) (interchain with G-Cter in ubiquitin)). S96 is modified (phosphoserine). Residue D110 is the Proton donor of the active site. H111 and D145 together coordinate Zn(2+). S147 is modified (phosphoserine). T150 carries the phosphothreonine modification. E175 contributes to the Zn(2+) binding site. A Phosphothreonine modification is found at T179. H227 lines the Zn(2+) pocket. G228 lines the dihydroxyacetone phosphate pocket. Zn(2+) is bound at residue H265. Residues 266–268 (GGS) and 287–290 (NLDT) contribute to the dihydroxyacetone phosphate site. Residue S268 is modified to Phosphoserine. The residue at position 290 (T290) is a Phosphothreonine. K308 participates in a covalent cross-link: Glycyl lysine isopeptide (Lys-Gly) (interchain with G-Cter in ubiquitin). A Phosphotyrosine modification is found at Y310. At S313 the chain carries Phosphoserine.

This sequence belongs to the class II fructose-bisphosphate aldolase family. As to quaternary structure, homodimer. The cofactor is Zn(2+).

It catalyses the reaction beta-D-fructose 1,6-bisphosphate = D-glyceraldehyde 3-phosphate + dihydroxyacetone phosphate. It functions in the pathway carbohydrate degradation; glycolysis; D-glyceraldehyde 3-phosphate and glycerone phosphate from D-glucose: step 4/4. In terms of biological role, catalyzes the aldol condensation of dihydroxyacetone phosphate (DHAP or glycerone-phosphate) with glyceraldehyde 3-phosphate (G3P) to form fructose 1,6-bisphosphate (FBP) in gluconeogenesis and the reverse reaction in glycolysis. The protein is Fructose-bisphosphate aldolase (FBA1) of Saccharomyces cerevisiae (strain ATCC 204508 / S288c) (Baker's yeast).